A 617-amino-acid polypeptide reads, in one-letter code: Phenylalanine--tRNA ligase beta subunit (617 aa).

Residues 306–383 (IQEKQINAQV…IGYGYDNLKK (78 aa)) form the B5 domain. The Mg(2+) site is built by Asp-361, Asp-367, Glu-370, and Asp-371.

This sequence belongs to the phenylalanyl-tRNA synthetase beta subunit family. Type 2 subfamily. As to quaternary structure, tetramer of two alpha and two beta subunits. It depends on Mg(2+) as a cofactor.

It is found in the cytoplasm. The catalysed reaction is tRNA(Phe) + L-phenylalanine + ATP = L-phenylalanyl-tRNA(Phe) + AMP + diphosphate + H(+). This is Phenylalanine--tRNA ligase beta subunit (phesB) from Dictyostelium discoideum (Social amoeba).